The following is a 101-amino-acid chain: RNA-binding protein Hfq (101 aa).

A Sm domain is found at 9-68; it reads DPFLNALRRERVPVSIYLVNGIKLQGQVESFDQFVILLKNTVSQMVYKHAISTVVPSRPV. The segment at 63–101 is disordered; it reads VPSRPVSHHSNTPSGSTNNYHGSNPSAPQQPQQDSDDAE. A compositionally biased stretch (polar residues) spans 70–86; the sequence is HHSNTPSGSTNNYHGSN.

This sequence belongs to the Hfq family. In terms of assembly, homohexamer.

Functionally, RNA chaperone that binds small regulatory RNA (sRNAs) and mRNAs to facilitate mRNA translational regulation in response to envelope stress, environmental stress and changes in metabolite concentrations. Also binds with high specificity to tRNAs. The chain is RNA-binding protein Hfq from Yersinia pseudotuberculosis serotype O:1b (strain IP 31758).